The sequence spans 340 residues: Uroporphyrinogen decarboxylase (340 aa).

Residues 21–25 (RQAGR), Phe40, Asp71, Tyr146, Ser201, and His316 contribute to the substrate site.

It belongs to the uroporphyrinogen decarboxylase family. In terms of assembly, homodimer.

Its subcellular location is the cytoplasm. It catalyses the reaction uroporphyrinogen III + 4 H(+) = coproporphyrinogen III + 4 CO2. Its pathway is porphyrin-containing compound metabolism; protoporphyrin-IX biosynthesis; coproporphyrinogen-III from 5-aminolevulinate: step 4/4. Catalyzes the decarboxylation of four acetate groups of uroporphyrinogen-III to yield coproporphyrinogen-III. This chain is Uroporphyrinogen decarboxylase, found in Rickettsia bellii (strain RML369-C).